Here is an 867-residue protein sequence, read N- to C-terminus: Mitochondrial escape protein 2 (867 aa).

The N-terminal 25 residues, 1–25 (MIIRTLRSQLRLPKPVYISPPCRYY), are a transit peptide targeting the mitochondrion. Residues 26-279 (STDLEKLKKE…LVSLISNHTK (254 aa)) are Mitochondrial matrix-facing. An RRM domain is found at 179–264 (GTPWIEDLRR…TTLHIQFVAI (86 aa)). A helical transmembrane segment spans residues 280–300 (IAIPVLIALLATFAVLIFDPI). Over 301–867 (REWFIEYKIL…DGKSFLGIKF (567 aa)) the chain is Mitochondrial intermembrane. The stretch at 795–852 (IGRLISLEAAKIQKLEEELEKIYKIGKVDGRIDYVSQKIEASNKKILDLEKQAADVAS) forms a coiled coil.

The protein belongs to the YME2 family.

Its subcellular location is the mitochondrion inner membrane. In terms of biological role, plays a role in maintaining the mitochondrial genome and in controlling the mtDNA escape. Involved in the regulation of mtDNA nucleotide structure and number. May have a dispensable role in early maturation of pre-rRNA. The polypeptide is Mitochondrial escape protein 2 (PRP13) (Candida albicans (strain SC5314 / ATCC MYA-2876) (Yeast)).